A 1538-amino-acid chain; its full sequence is Ferredoxin-dependent glutamate synthase (1538 aa).

C34 functions as the For GATase activity in the catalytic mechanism. A Glutamine amidotransferase type-2 domain is found at C34 to F431. L1109–R1166 is an FMN binding site. [3Fe-4S] cluster-binding residues include C1162, C1168, and C1173.

The protein belongs to the glutamate synthase family. Monomer. [3Fe-4S] cluster is required as a cofactor. Requires FAD as cofactor. The cofactor is FMN.

Its subcellular location is the plastid. It is found in the chloroplast stroma. It carries out the reaction 2 oxidized [2Fe-2S]-[ferredoxin] + 2 L-glutamate = L-glutamine + 2 reduced [2Fe-2S]-[ferredoxin] + 2-oxoglutarate + 2 H(+). Its pathway is amino-acid biosynthesis; L-glutamate biosynthesis via GLT pathway; L-glutamate from 2-oxoglutarate and L-glutamine (ferredoxin route): step 1/1. It functions in the pathway energy metabolism; nitrogen metabolism. The polypeptide is Ferredoxin-dependent glutamate synthase (gltB) (Pyropia yezoensis (Susabi-nori)).